A 101-amino-acid chain; its full sequence is Small ribosomal subunit protein uS14 (101 aa).

The protein belongs to the universal ribosomal protein uS14 family. As to quaternary structure, part of the 30S ribosomal subunit. Contacts proteins S3 and S10.

Functionally, binds 16S rRNA, required for the assembly of 30S particles and may also be responsible for determining the conformation of the 16S rRNA at the A site. The sequence is that of Small ribosomal subunit protein uS14 from Chlamydia abortus (strain DSM 27085 / S26/3) (Chlamydophila abortus).